The primary structure comprises 329 residues: MQQQVEPTLKNVLENQTLKWIFVGGKGGVGKTTTSSSLATLFAKSGKRTIIISTDPAHNLSDCFDQKIGSQPTQIKGIENLSAMEIDPTVDPDKLKLPTLQGFMNDQATKSLLSELISSVPGIDEAMSFAELMNSVDEMKYDLIIFDTAPTGHTLRLLNFPNIMEKGLNKLVQLRYNFQNLASQFQGLFGSQEEFDQQMNQMFSKIETMKDTVTKVNAQMKDRNKTTFIGVCIPEFLSMYETERLVQELTKFKIDIHNIVINQVLFPDDQCKMCNARAKMQKKYLDQMIDLYDDFHVVIMPLQENEVRGIDGLKQFCELLLKPKSVPQF.

26 to 33 (KGGVGKTT) is a binding site for ATP. The active site involves aspartate 55. The ATP site is built by glutamate 235 and asparagine 262. Residues cysteine 271 and cysteine 274 each coordinate Zn(2+).

Belongs to the arsA ATPase family. As to quaternary structure, homodimer.

The protein localises to the cytoplasm. Its subcellular location is the endoplasmic reticulum. Its function is as follows. ATPase required for the post-translational delivery of tail-anchored (TA) proteins to the endoplasmic reticulum. Recognizes and selectively binds the transmembrane domain of TA proteins in the cytosol. This complex then targets to the endoplasmic reticulum by membrane-bound receptors, where the tail-anchored protein is released for insertion. This process is regulated by ATP binding and hydrolysis. ATP binding drives the homodimer towards the closed dimer state, facilitating recognition of newly synthesized TA membrane proteins. ATP hydrolysis is required for insertion. Subsequently, the homodimer reverts towards the open dimer state, lowering its affinity for the membrane-bound receptor, and returning it to the cytosol to initiate a new round of targeting. This is ATPase ASNA1 homolog 1 from Paramecium tetraurelia.